The primary structure comprises 230 residues: Orotidine 5'-phosphate decarboxylase (230 aa).

Residues Asp-11, Lys-34, 61 to 70, Thr-117, Arg-179, Gln-188, Gly-208, and Arg-209 each bind substrate; that span reads DLKLHDIPNT. The Proton donor role is filled by Lys-63.

Belongs to the OMP decarboxylase family. Type 1 subfamily. As to quaternary structure, homodimer.

The enzyme catalyses orotidine 5'-phosphate + H(+) = UMP + CO2. The protein operates within pyrimidine metabolism; UMP biosynthesis via de novo pathway; UMP from orotate: step 2/2. In terms of biological role, catalyzes the decarboxylation of orotidine 5'-monophosphate (OMP) to uridine 5'-monophosphate (UMP). This Streptococcus gordonii (strain Challis / ATCC 35105 / BCRC 15272 / CH1 / DL1 / V288) protein is Orotidine 5'-phosphate decarboxylase.